Here is a 400-residue protein sequence, read N- to C-terminus: Enoyl-[acyl-carrier-protein] reductase [NADH] (400 aa).

NAD(+)-binding positions include 48–53, 74–75, 111–112, and 139–140; these read GSSSGY, FE, DA, and LA. Substrate is bound at residue Y225. The active-site Proton donor is Y235. NAD(+)-binding positions include K244 and 273–275; that span reads VVT.

Belongs to the TER reductase family. As to quaternary structure, monomer.

It carries out the reaction a 2,3-saturated acyl-[ACP] + NAD(+) = a (2E)-enoyl-[ACP] + NADH + H(+). It participates in lipid metabolism; fatty acid biosynthesis. In terms of biological role, involved in the final reduction of the elongation cycle of fatty acid synthesis (FAS II). Catalyzes the reduction of a carbon-carbon double bond in an enoyl moiety that is covalently linked to an acyl carrier protein (ACP). The protein is Enoyl-[acyl-carrier-protein] reductase [NADH] of Aliivibrio fischeri (strain MJ11) (Vibrio fischeri).